Consider the following 371-residue polypeptide: 4-hydroxybutyrate dehydrogenase (371 aa).

Residues 88-92 (GSVID), 126-130 (TTCGT), and Lys-148 each bind NAD(+). Asp-182, His-186, His-253, and His-267 together coordinate Fe cation. His-267 contacts NAD(+).

The protein belongs to the iron-containing alcohol dehydrogenase family. Homodimer. Fe(2+) is required as a cofactor. Cu(2+) serves as cofactor.

It carries out the reaction 4-hydroxybutanoate + NAD(+) = succinate semialdehyde + NADH + H(+). Inactivated by oxygen. In terms of biological role, involved in the anaerobic succinate degradation pathway. Catalyzes the interconversion of gamma-hydroxybutyrate (GHB) and succinic semialdehyde (SSA). This chain is 4-hydroxybutyrate dehydrogenase, found in Clostridium kluyveri (strain ATCC 8527 / DSM 555 / NBRC 12016 / NCIMB 10680 / K1).